Here is a 218-residue protein sequence, read N- to C-terminus: Peptide deformylase 1 (218 aa).

Residues cysteine 126 and histidine 168 each contribute to the Fe cation site. The active site involves glutamate 169. Histidine 172 is a binding site for Fe cation.

It belongs to the polypeptide deformylase family. Requires Fe(2+) as cofactor.

It carries out the reaction N-terminal N-formyl-L-methionyl-[peptide] + H2O = N-terminal L-methionyl-[peptide] + formate. In terms of biological role, removes the formyl group from the N-terminal Met of newly synthesized proteins. Requires at least a dipeptide for an efficient rate of reaction. N-terminal L-methionine is a prerequisite for activity but the enzyme has broad specificity at other positions. In Streptomyces coelicolor (strain ATCC BAA-471 / A3(2) / M145), this protein is Peptide deformylase 1.